Consider the following 297-residue polypeptide: MDLRDLKTFLHLAESRHFGRSARAMHVSPSTLSRQIQRLEEDLGQPLFVRDNRTVTLTEAGEELRVFAQQTLLQYQQLRHTIDQQGPSLSGELHIFCSVTAAYSHLPPILDRFRAEHPSVEIKLTTGDAADAMEKVVTGEADLAIAGKPETLPGAVAFSMLENLAVVLIAPALPCPVRNQVSVEKPDWSTVPFIMADQGPVRRRIELWFRRNKISNPMIYATVGGHEAMVSMVALGCGVALLPEVVLENSPEPVRNRVMILERSDEKTPFELGVCAQKKRLHEPLIEAFWKILPNHK.

The HTH lysR-type domain maps to 1-58 (MDLRDLKTFLHLAESRHFGRSARAMHVSPSTLSRQIQRLEEDLGQPLFVRDNRTVTLT). Residues 18 to 37 (FGRSARAMHVSPSTLSRQIQ) constitute a DNA-binding region (H-T-H motif).

It belongs to the LysR transcriptional regulatory family.

It is found in the cytoplasm. This protein activates the transcription of the ilvC gene in the presence of acetolactate or acetohydroxybutyrate. IlvY is also a negative regulator of its own expression. The chain is HTH-type transcriptional regulator IlvY (ilvY) from Escherichia coli (strain K12).